The sequence spans 461 residues: Ribulose bisphosphate carboxylase (461 aa).

Asn-113 lines the substrate pocket. Lys-168 functions as the Proton acceptor in the catalytic mechanism. Lys-170 contributes to the substrate binding site. Positions 193, 195, and 196 each coordinate Mg(2+). Lys-193 is modified (N6-carboxylysine). His-289 acts as the Proton acceptor in catalysis. Substrate contacts are provided by Arg-290, His-323, and Ser-370.

Belongs to the RuBisCO large chain family. Type II subfamily. In terms of assembly, homodimer. Mg(2+) serves as cofactor.

It catalyses the reaction 2 (2R)-3-phosphoglycerate + 2 H(+) = D-ribulose 1,5-bisphosphate + CO2 + H2O. It carries out the reaction D-ribulose 1,5-bisphosphate + O2 = 2-phosphoglycolate + (2R)-3-phosphoglycerate + 2 H(+). In terms of biological role, ruBisCO catalyzes two reactions: the carboxylation of D-ribulose 1,5-bisphosphate, the primary event in carbon dioxide fixation, as well as the oxidative fragmentation of the pentose substrate. Both reactions occur simultaneously and in competition at the same active site. In Thiomonas intermedia (strain K12) (Thiobacillus intermedius), this protein is Ribulose bisphosphate carboxylase.